The following is a 468-amino-acid chain: Adenylosuccinate synthetase (468 aa).

GTP-binding positions include 23–29 (GDEGKGK) and 51–53 (GHE). Residue aspartate 24 is the Proton acceptor of the active site. 2 residues coordinate Mg(2+): aspartate 24 and glycine 51. IMP contacts are provided by residues 24–27 (DEGK), 49–52 (NSGH), threonine 142, arginine 156, asparagine 238, threonine 253, and arginine 317. Histidine 52 functions as the Proton donor in the catalytic mechanism. A substrate-binding site is contributed by 313–319 (VTTGRTR). GTP contacts are provided by residues arginine 319 and 345 to 347 (KLD).

The protein belongs to the adenylosuccinate synthetase family. As to quaternary structure, homodimer. Requires Mg(2+) as cofactor.

It localises to the cytoplasm. The enzyme catalyses IMP + L-aspartate + GTP = N(6)-(1,2-dicarboxyethyl)-AMP + GDP + phosphate + 2 H(+). The protein operates within purine metabolism; AMP biosynthesis via de novo pathway; AMP from IMP: step 1/2. Plays an important role in the salvage pathway for purine nucleotide biosynthesis. Catalyzes the first committed step in the biosynthesis of AMP from IMP. This Theileria annulata protein is Adenylosuccinate synthetase.